Reading from the N-terminus, the 396-residue chain is MAKKVVTDLDLKDKKVLVRVDFNVPMKDGKITNDNRIVAALPTIEYILEQNGKAILFSHLGKVKTEEDKEGKSLRPVAARLSELLGKEVKFVPTTRGPELEKAIDELKDGEVLLFENTRFEDIDGKKESKNDPELGKYWASLGDVFVNDAFGTAHRAHASNVGIASNLESAAGFLMEKEIKFIGGVVDNPARPLVAILGGAKVSDKIGVIENLLTKADKVLVGGGMTFTFMAAKGQEIGKSLLEADKVELAKGLLEKAGDKLVLPVDAVVSKEFSNDAPFHTVSADSIPADEMGLDIGQATIDLFTKELQGAKTVVWNGPMGVFELSNFAKGTIGVCEAIANLTDATTIIGGGDSAAAAMDLGFADKFTHISTGGGASLEYLEGKELPGVASISDK.

Residues 21 to 23 (DFN), arginine 36, 59 to 62 (HLGK), arginine 119, and arginine 156 contribute to the substrate site. ATP is bound by residues lysine 206, glycine 294, glutamate 325, and 352-355 (GGDS).

The protein belongs to the phosphoglycerate kinase family. As to quaternary structure, monomer.

The protein resides in the cytoplasm. It catalyses the reaction (2R)-3-phosphoglycerate + ATP = (2R)-3-phospho-glyceroyl phosphate + ADP. The protein operates within carbohydrate degradation; glycolysis; pyruvate from D-glyceraldehyde 3-phosphate: step 2/5. The polypeptide is Phosphoglycerate kinase (Listeria welshimeri serovar 6b (strain ATCC 35897 / DSM 20650 / CCUG 15529 / CIP 8149 / NCTC 11857 / SLCC 5334 / V8)).